Consider the following 587-residue polypeptide: Phosphomethylpyrimidine synthase (587 aa).

Residues Asn218, Met247, Tyr276, His312, 332–334, 373–376, and Glu412 each bind substrate; these read SRG and DGLR. Position 416 (His416) interacts with Zn(2+). Tyr439 is a substrate binding site. Position 480 (His480) interacts with Zn(2+). [4Fe-4S] cluster is bound by residues Cys560, Cys563, and Cys568.

It belongs to the ThiC family. [4Fe-4S] cluster is required as a cofactor.

The catalysed reaction is 5-amino-1-(5-phospho-beta-D-ribosyl)imidazole + S-adenosyl-L-methionine = 4-amino-2-methyl-5-(phosphooxymethyl)pyrimidine + CO + 5'-deoxyadenosine + formate + L-methionine + 3 H(+). It functions in the pathway cofactor biosynthesis; thiamine diphosphate biosynthesis. Catalyzes the synthesis of the hydroxymethylpyrimidine phosphate (HMP-P) moiety of thiamine from aminoimidazole ribotide (AIR) in a radical S-adenosyl-L-methionine (SAM)-dependent reaction. In Porphyromonas gingivalis (strain ATCC 33277 / DSM 20709 / CIP 103683 / JCM 12257 / NCTC 11834 / 2561), this protein is Phosphomethylpyrimidine synthase.